The following is a 1190-amino-acid chain: DNA-directed RNA polymerase subunit beta (1190 aa).

Positions glutamate 1155–glutamate 1190 are disordered. Residues lysine 1173 to glutamate 1190 are compositionally biased toward basic and acidic residues.

It belongs to the RNA polymerase beta chain family. As to quaternary structure, the RNAP catalytic core consists of 2 alpha, 1 beta, 1 beta' and 1 omega subunit. When a sigma factor is associated with the core the holoenzyme is formed, which can initiate transcription.

It catalyses the reaction RNA(n) + a ribonucleoside 5'-triphosphate = RNA(n+1) + diphosphate. Its function is as follows. DNA-dependent RNA polymerase catalyzes the transcription of DNA into RNA using the four ribonucleoside triphosphates as substrates. This is DNA-directed RNA polymerase subunit beta from Geobacillus kaustophilus (strain HTA426).